We begin with the raw amino-acid sequence, 447 residues long: Rab GDP dissociation inhibitor alpha (447 aa).

Belongs to the Rab GDI family. As to quaternary structure, interacts with RHOH. Interacts with the non-phosphorylated forms of RAB1A, RAB3A, RAB5A, RAB5B, RAB5C, RAB8A, RAB8B, RAB10, RAB12, RAB35, and RAB43.

The protein localises to the cytoplasm. The protein resides in the golgi apparatus. It is found in the trans-Golgi network. In terms of biological role, regulates the GDP/GTP exchange reaction of most Rab proteins by inhibiting the dissociation of GDP from them, and the subsequent binding of GTP to them. Promotes the dissociation of GDP-bound Rab proteins from the membrane and inhibits their activation. Promotes the dissociation of RAB1A, RAB3A, RAB5A and RAB10 from membranes. The sequence is that of Rab GDP dissociation inhibitor alpha (GDI1) from Pongo pygmaeus (Bornean orangutan).